The primary structure comprises 478 residues: Cytochrome c-552 (478 aa).

Residues Met1–Ala26 form the signal peptide. His94 lines the heme c pocket. Positions 122, 125, and 126 each coordinate heme. Heme c-binding residues include Cys160, Cys163, His164, Cys209, Cys212, and His213. 4 residues coordinate Ca(2+): Glu215, Tyr216, Lys261, and Gln263. Substrate is bound at residue Tyr216. His264 is a substrate binding site. Heme c is bound by residues His275, Cys282, Cys285, His286, His301, Cys314, Cys317, His318, and His393.

This sequence belongs to the cytochrome c-552 family. Requires Ca(2+) as cofactor. Heme c is required as a cofactor.

Its subcellular location is the periplasm. The enzyme catalyses 6 Fe(III)-[cytochrome c] + NH4(+) + 2 H2O = 6 Fe(II)-[cytochrome c] + nitrite + 8 H(+). It participates in nitrogen metabolism; nitrate reduction (assimilation). In terms of biological role, catalyzes the reduction of nitrite to ammonia, consuming six electrons in the process. This is Cytochrome c-552 from Escherichia coli O6:H1 (strain CFT073 / ATCC 700928 / UPEC).